We begin with the raw amino-acid sequence, 121 residues long: Small ribosomal subunit protein uS13 (121 aa).

Residues 94-121 (GLPVRGQNTKNNARTRKGKAVAIAGKKK) form a disordered region. Residues 106-121 (ARTRKGKAVAIAGKKK) show a composition bias toward basic residues.

This sequence belongs to the universal ribosomal protein uS13 family. As to quaternary structure, part of the 30S ribosomal subunit. Forms a loose heterodimer with protein S19. Forms two bridges to the 50S subunit in the 70S ribosome.

In terms of biological role, located at the top of the head of the 30S subunit, it contacts several helices of the 16S rRNA. In the 70S ribosome it contacts the 23S rRNA (bridge B1a) and protein L5 of the 50S subunit (bridge B1b), connecting the 2 subunits; these bridges are implicated in subunit movement. Contacts the tRNAs in the A and P-sites. The protein is Small ribosomal subunit protein uS13 of Streptococcus sanguinis (strain SK36).